A 189-amino-acid polypeptide reads, in one-letter code: Chitin synthase 1 (189 aa).

It belongs to the chitin synthase family. Class I subfamily.

Its subcellular location is the cell membrane. The enzyme catalyses [(1-&gt;4)-N-acetyl-beta-D-glucosaminyl](n) + UDP-N-acetyl-alpha-D-glucosamine = [(1-&gt;4)-N-acetyl-beta-D-glucosaminyl](n+1) + UDP + H(+). In terms of biological role, polymerizes chitin, a structural polymer of the cell wall and septum, by transferring the sugar moiety of UDP-GlcNAc to the non-reducing end of the growing chitin polymer. This Aspergillus niger protein is Chitin synthase 1 (chs1).